A 308-amino-acid polypeptide reads, in one-letter code: Aspartate carbamoyltransferase catalytic subunit (308 aa).

R59 and T60 together coordinate carbamoyl phosphate. K87 contributes to the L-aspartate binding site. Positions 109, 139, and 142 each coordinate carbamoyl phosphate. Positions 172 and 224 each coordinate L-aspartate. 2 residues coordinate carbamoyl phosphate: A265 and P266.

Belongs to the aspartate/ornithine carbamoyltransferase superfamily. ATCase family. In terms of assembly, heterododecamer (2C3:3R2) of six catalytic PyrB chains organized as two trimers (C3), and six regulatory PyrI chains organized as three dimers (R2).

The enzyme catalyses carbamoyl phosphate + L-aspartate = N-carbamoyl-L-aspartate + phosphate + H(+). The protein operates within pyrimidine metabolism; UMP biosynthesis via de novo pathway; (S)-dihydroorotate from bicarbonate: step 2/3. Functionally, catalyzes the condensation of carbamoyl phosphate and aspartate to form carbamoyl aspartate and inorganic phosphate, the committed step in the de novo pyrimidine nucleotide biosynthesis pathway. This is Aspartate carbamoyltransferase catalytic subunit from Streptococcus mutans serotype c (strain ATCC 700610 / UA159).